Reading from the N-terminus, the 1840-residue chain is Sodium channel protein type 4 subunit alpha (1840 aa).

Residues 1 to 131 (MASSSLPNLV…RVAIKVLIHA (131 aa)) are Cytoplasmic-facing. Basic and acidic residues predominate over residues 36-60 (EARLQRNKQMEIEEPERKPRSDLEA). Residues 36–63 (EARLQRNKQMEIEEPERKPRSDLEAGKN) are disordered. The stretch at 113 to 448 (LLSPFSIVRR…VVAMAYAEQN (336 aa)) is one I repeat. The helical transmembrane segment at 132-150 (LFSMFIMITILTNCVFMTM) threads the bilayer. Over 151–157 (SNPPSWS) the chain is Extracellular. Residues 158 to 178 (KHVEYTFTGIYTFESLIKMLA) form a helical membrane-spanning segment. Residues 179–192 (RGFCIDDFTFLRDP) lie on the Cytoplasmic side of the membrane. The chain crosses the membrane as a helical span at residues 193 to 210 (WNWLDFSVITMAYVTEFV). The Extracellular portion of the chain corresponds to 211-216 (DLGNIS). The helical transmembrane segment at 217–233 (ALRTFRVLRALKTITVI) threads the bilayer. Residues 234–252 (PGLKTIVGALIQSVKKLSD) lie on the Cytoplasmic side of the membrane. A helical membrane pass occupies residues 253–272 (VMILTVFCLSVFALVGLQLF). Residues 273–385 (MGNLRQKCVR…PNYGYTSYDT (113 aa)) lie on the Extracellular side of the membrane. A disulfide bridge connects residues Cys280 and Cys354. N-linked (GlcNAc...) asparagine glycans are attached at residues Asn288, Asn291, Asn297, Asn303, Asn309, Asn315, Asn327, and Asn356. Cys363 and Cys369 are disulfide-bonded. Residues 386 to 410 (FSWAFLALFRLMTQDYWENLFQLTL) constitute an intramembrane region (pore-forming). Over 411 to 417 (RAAGKTY) the chain is Extracellular. Residues 418 to 438 (MIFFVVIIFLGSFYLINLILA) form a helical membrane-spanning segment. Residues 439–572 (VVAMAYAEQN…HIIYLIVMDP (134 aa)) lie on the Cytoplasmic side of the membrane. The disordered stretch occupies residues 481-522 (AAQALESGEEADGDPTHNKDCNGSLDASGEKGPPRPSCSADS). Residue Ser487 is modified to Phosphoserine. One copy of the II repeat lies at 554–826 (CCAPWVKFKH…QIAIGRIKWG (273 aa)). The chain crosses the membrane as a helical span at residues 573–591 (FVDLGITICIVLNTLFMAM). Residues 592–602 (EHYPMTEHFDN) are Extracellular-facing. Residues 603-622 (VLSVGNLVFTGIFTAEMVLK) form a helical membrane-spanning segment. The Cytoplasmic segment spans residues 623-636 (LIAMDPYEYFQQGW). A helical membrane pass occupies residues 637–656 (NIFDSFIVTLSLVELGLANV). Residues 657-658 (QG) are Extracellular-facing. Residues 659–676 (LSVLRSFRLLRVFKLAKS) form a helical membrane-spanning segment. At 677-692 (WPTLNMLIKIIGNSVG) the chain is on the cytoplasmic side. The chain crosses the membrane as a helical span at residues 693-711 (ALGNLTLVLAIIVFIFAVV). Topologically, residues 712-740 (GMQLFGKSYKECVCKIASDCNLPRWHMND) are extracellular. Cys725 and Cys731 are disulfide-bonded. The pore-forming intramembrane region spans 741 to 761 (FFHSFLIVFRILCGEWIETMW). Residues 762 to 772 (DCMEVAGQAMC) lie on the Extracellular side of the membrane. A disulfide bridge connects residues Cys763 and Cys772. A helical membrane pass occupies residues 773–791 (LTVFLMVMVIGNLVVLNLF). The Cytoplasmic portion of the chain corresponds to 792-1025 (LALLLSSFSA…ACFKIVEHNW (234 aa)). Disordered stretches follow at residues 854–884 (EPGG…LKDN) and 925–983 (DLEM…GEQP). The segment covering 868–884 (EDEKKEPPPEDKELKDN) has biased composition (basic and acidic residues). Composition is skewed to acidic residues over residues 925–940 (DLEM…FSEP) and 968–983 (EDPE…GEQP). The III repeat unit spans residues 1006–1319 (RGKMWWTLRR…KKYYNAMKKL (314 aa)). A helical membrane pass occupies residues 1026–1043 (FETFIVFMILLSSGALAF). The Extracellular portion of the chain corresponds to 1044-1056 (EDIYIEQRRVIRT). A helical membrane pass occupies residues 1057-1075 (ILEYADKVFTYIFILEMLL). Residues 1076–1089 (KWVAYGFKVYFTNA) lie on the Cytoplasmic side of the membrane. A helical transmembrane segment spans residues 1090–1108 (WCWLDFLIVDVSIISLVAN). Residues 1109–1116 (WLGYSELG) are Extracellular-facing. A helical transmembrane segment spans residues 1117-1135 (PIKSLRTLRALRPLRALSR). At 1136-1152 (FEGMRVVVNALLGAIPS) the chain is on the cytoplasmic side. A helical membrane pass occupies residues 1153–1172 (IMNVLLVCLIFWLIFSIMGV). The Extracellular segment spans residues 1173–1223 (NLFAGKFYYCVNTTTSERFDISVVNNKSESESLMYTGQVRWMNVKVNYDNV). An N-linked (GlcNAc...) asparagine glycan is attached at Asn1198. Positions 1224–1245 (GLGYLSLLQVATFKGWMDIMYA) form an intramembrane region, pore-forming. The Extracellular portion of the chain corresponds to 1246–1262 (AVDSREKEEQPHYEVNL). Residues 1263-1284 (YMYLYFVIFIIFGSFFTLNLFI) traverse the membrane as a helical segment. Over 1285-1347 (GVIIDNFNQQ…MVYDFVTKQV (63 aa)) the chain is Cytoplasmic. The interval 1303 to 1305 (IFM) is important for rapid channel inactivation. The stretch at 1328 to 1626 (IPRPQNKIQG…WEKFDPDATQ (299 aa)) is one IV repeat. The chain crosses the membrane as a helical span at residues 1348 to 1365 (FDISIMILICLNMVTMMV). Residues 1366-1376 (ETDDQSQLKVD) lie on the Extracellular side of the membrane. Residues 1377–1395 (ILYNINMVFIIIFTGECVL) traverse the membrane as a helical segment. The Cytoplasmic portion of the chain corresponds to 1396–1407 (KMFALRHYYFTI). Residues 1408–1425 (GWNIFDFVVVILSIVGLA) form a helical membrane-spanning segment. Topologically, residues 1426 to 1438 (LSDLIQKYFVSPT) are extracellular. The helical transmembrane segment at 1439-1455 (LFRVIRLARIGRVLRLI) threads the bilayer. Over 1456–1474 (RGAKGIRTLLFALMMSLPA) the chain is Cytoplasmic. The helical transmembrane segment at 1475–1492 (LFNIGLLLFLVMFIYSIF) threads the bilayer. At 1493-1514 (GMSNFAYVKKESGIDDMFNFET) the chain is on the extracellular side. Positions 1515-1537 (FGNSIICLFEITTSAGWDGLLNP) form an intramembrane region, pore-forming. Over 1538 to 1567 (ILNSGPPDCDPTLENPGTNVRGDCGNPSIG) the chain is Extracellular. An intrachain disulfide couples Cys1546 to Cys1561. Residues 1568 to 1590 (ICFFCSYIIISFLIVVNMYIAII) form a helical membrane-spanning segment. The Cytoplasmic portion of the chain corresponds to 1591-1840 (LENFNVATEE…VRPGVKESLV (250 aa)). The region spanning 1720–1749 (EEVCAIKIQRAYRRHLLQRSVKQASYMYRH) is the IQ domain. The tract at residues 1775–1840 (HEKEGDGVQS…VRPGVKESLV (66 aa)) is disordered. Low complexity predominate over residues 1804-1813 (PTSSSDTALT). Pro residues predominate over residues 1814–1824 (PSPPPLPPSSS).

It belongs to the sodium channel (TC 1.A.1.10) family. Nav1.4/SCN4A subfamily. In terms of assembly, the Nav1.4 voltage-gated sodium channel consists of an ion-conducting alpha subunit SCN4A which is functional on its own and a regulatory beta subunit SCN1B. SCN1B strongly enhances the presence of SCN4A at the cell surface. SCN1B is also required for rapid channel inactivation and recovery after inactivation. It prevents the decrease of channel activity in response to repetitive, high-frequency depolarizations. Interacts with the syntrophins SNTA1, SNTB1 and SNTB2 (via PDZ domain); probably links SCN4A to the actin cytoskeleton and the extracellular matrix via the dystrophin-associated protein complex and regulates its localization in muscle cells. Interacts with TMEM233; probable regulator of the channel. As to expression, detected in skeletal muscle.

The protein localises to the cell membrane. It catalyses the reaction Na(+)(in) = Na(+)(out). With respect to regulation, potently inhibited by tetrodotoxin and saxitoxin. Inhibited by the conotoxin GVIIJ. Pore-forming subunit of Nav1.4, a voltage-gated sodium (Nav) channel that directly mediates the depolarizing phase of action potentials in excitable membranes. Navs, also called VGSCs (voltage-gated sodium channels) or VDSCs (voltage-dependent sodium channels), operate by switching between closed and open conformations depending on the voltage difference across the membrane. In the open conformation they allow Na(+) ions to selectively pass through the pore, along their electrochemical gradient. The influx of Na+ ions provokes membrane depolarization, initiating the propagation of electrical signals throughout cells and tissues. Highly expressed in skeletal muscles, Nav1.4 generates the action potential crucial for muscle contraction. This chain is Sodium channel protein type 4 subunit alpha, found in Rattus norvegicus (Rat).